Consider the following 257-residue polypeptide: Cytochrome b561 domain-containing protein At2g30890 (257 aa).

The first 21 residues, 1–21 (MEIHHQLLVSLLFLLLPLCSS), serve as a signal peptide directing secretion. A Cytochrome b561 domain is found at 22-219 (QENTRSLAID…LFQDKWSYIQ (198 aa)). The next 5 membrane-spanning stretches (helical) occupy residues 55–75 (VHGF…IISI), 91–111 (LFFL…IGAV), 125–145 (HQQL…LGFL), 157–177 (WFVG…INIY), and 191–211 (ANLW…VYLF). Residues histidine 56, histidine 95, histidine 125, and histidine 161 each contribute to the heme b site. A disordered region spans residues 235–257 (NISTAETGHGYEVEESKPELEKC). Basic and acidic residues predominate over residues 243-257 (HGYEVEESKPELEKC).

It depends on heme b as a cofactor.

It is found in the membrane. This is Cytochrome b561 domain-containing protein At2g30890 from Arabidopsis thaliana (Mouse-ear cress).